The primary structure comprises 1032 residues: Connector enhancer of kinase suppressor of ras 2 (1032 aa).

The region spanning 11-76 is the SAM domain; the sequence is WSPSQVVDWM…LEAVDLLCAL (66 aa). S12 carries the post-translational modification Phosphoserine. The region spanning 84–178 is the CRIC domain; the sequence is NLKTLSHKLN…TIVQQDCTVY (95 aa). Residues 215–297 enclose the PDZ domain; sequence VIQLANIKPS…GVILTLKKRP (83 aa). In terms of domain architecture, DUF1170 spans 302 to 515; it reads TSAPALLKNM…PAHYSLLPSL (214 aa). Low complexity predominate over residues 324-340; sequence RSPTSSVATPSSTISTP. Residues 324–349 are disordered; that stretch reads RSPTSSVATPSSTISTPTKRDSSALQ. A phosphoserine mark is found at S338 and S390. Disordered stretches follow at residues 480–509 and 538–558; these read EEYM…PAHY and FQQS…ISGK. Over residues 545–558 the composition is skewed to basic residues; sequence HKSKKKNKGAISGK. The 100-residue stretch at 570–669 folds into the PH domain; the sequence is RGDCEGWLWK…WLNRINMLTA (100 aa). Residues 682 to 766 are disordered; the sequence is DYWSESDKEE…PIRKTASQRR (85 aa). Y683 carries the phosphotyrosine modification. The segment covering 683–693 has biased composition (acidic residues); sequence YWSESDKEEAD. A phosphoserine mark is found at S685 and S687. Over residues 701-714 the composition is skewed to pro residues; it reads DSPPPPYDTYPRPP. Low complexity predominate over residues 730-740; the sequence is LSSTETSQSQS. Residues S756 and S767 each carry the phosphoserine modification. The disordered stretch occupies residues 864–900; the sequence is ACDPQDDIQPPEVEEEEEEEEEEAAGENVGEKNENRE. Residues 874–917 are a coiled coil; the sequence is PEVEEEEEEEEEEAAGENVGEKNENREEKLGDSLQDLYRALEEA. Residues 875 to 888 show a composition bias toward acidic residues; sequence EVEEEEEEEEEEAA. Phosphoserine is present on S906.

This sequence belongs to the CNKSR family. In terms of assembly, interacts with RAF1, RAB2L and RAL GTPase proteins. Phosphorylated on tyrosine.

It localises to the cytoplasm. The protein localises to the membrane. May function as an adapter protein or regulator of Ras signaling pathways. The chain is Connector enhancer of kinase suppressor of ras 2 (Cnksr2) from Mus musculus (Mouse).